Here is a 716-residue protein sequence, read N- to C-terminus: uncharacterized protein (716 aa).

Disordered stretches follow at residues 84–103 (SPSI…ERYP) and 153–189 (VTDE…SQTQ). At S97 the chain carries Phosphoserine. Glycyl lysine isopeptide (Lys-Gly) (interchain with G-Cter in SUMO2) cross-links involve residues K201, K204, K237, K283, and K626.

This is an uncharacterized protein from Homo sapiens (Human).